The following is a 164-amino-acid chain: Peptide deformylase-like (164 aa).

Residue Glu133 is part of the active site.

It belongs to the polypeptide deformylase family.

In Agrobacterium fabrum (strain C58 / ATCC 33970) (Agrobacterium tumefaciens (strain C58)), this protein is Peptide deformylase-like.